Reading from the N-terminus, the 129-residue chain is Glycine cleavage system H protein (129 aa).

A Lipoyl-binding domain is found at 24–106 (LVRIGISAFA…HGEGWLLLVK (83 aa)). The residue at position 65 (K65) is an N6-lipoyllysine.

The protein belongs to the GcvH family. In terms of assembly, the glycine cleavage system is composed of four proteins: P, T, L and H. Requires (R)-lipoate as cofactor.

Functionally, the glycine cleavage system catalyzes the degradation of glycine. The H protein shuttles the methylamine group of glycine from the P protein to the T protein. In Prochlorococcus marinus (strain SARG / CCMP1375 / SS120), this protein is Glycine cleavage system H protein.